The primary structure comprises 2462 residues: Piezo-type mechanosensitive ion channel homolog (2462 aa).

The next 19 helical transmembrane spans lie at 5–25 (LVGF…WSVI), 27–47 (FLDL…GYRF), 57–77 (IFIF…IWAA), 105–125 (TVMY…ADIY), 163–183 (AVQL…FFIG), 207–227 (LYIY…PINF), 248–268 (EGPD…LSYV), 325–345 (FFTY…FHFA), 347–367 (LCAF…PSLF), 374–394 (GLLL…NVAF), 404–424 (FGLG…FLYL), 467–487 (LIFL…IFFL), 502–522 (SLIL…IDLV), 554–574 (IALL…LFSF), 653–673 (VYLV…LLWI), 694–714 (AVLV…QLWL), 730–750 (APLL…QLYS), 792–812 (FYAS…GLVI), and 826–846 (SFLI…LWGM). The disordered stretch occupies residues 927 to 947 (ASVSSSNGENPSSTDHASISM). Residues 928 to 939 (SVSSSNGENPSS) show a composition bias toward low complexity. A run of 8 helical transmembrane segments spans residues 1027–1047 (FWIE…ALLL), 1050–1070 (FALL…CVLL), 1078–1098 (LWPV…VATW), 1143–1160 (TLIS…KLRA), 1204–1224 (LYCY…TGTL), 1228–1248 (ILHL…LEIL), 1260–1280 (VYNF…VGNF), and 1310–1330 (SALV…MFSS). Residues 1347 to 1400 (AIVREQEKKAARKTEQLQQIREAEEKKRQRNLQVEKMKSEMLNLRVQLHRMNSD) are a coiled coil. Residues 1543-1583 (SDTNEQSSVDDEVYDEMESQKRKHTPFERSTSLQSDRSSDG) are disordered. Over residues 1550 to 1559 (SVDDEVYDEM) the composition is skewed to acidic residues. Over residues 1570 to 1583 (ERSTSLQSDRSSDG) the composition is skewed to polar residues. The next 8 helical transmembrane spans lie at 1611 to 1631 (FIIA…AALF), 1647 to 1667 (VIML…QIII), 1916 to 1936 (YIFG…QSVI), 1956 to 1976 (FVII…IYLC), 1984 to 2004 (VYYL…AWSI), 2012 to 2032 (AGLA…LQAI), 2130 to 2150 (GICL…MYSS), and 2369 to 2389 (FLGD…FVLA).

Belongs to the PIEZO (TC 1.A.75) family.

The protein localises to the membrane. Pore-forming subunit of a mechanosensitive non-specific cation channel, that conducts both sodium and potassium ions. This is Piezo-type mechanosensitive ion channel homolog from Arabidopsis thaliana (Mouse-ear cress).